Here is a 149-residue protein sequence, read N- to C-terminus: Flagellar assembly factor FliW (149 aa).

It belongs to the FliW family. In terms of assembly, interacts with translational regulator CsrA and flagellin(s).

It localises to the cytoplasm. Its function is as follows. Acts as an anti-CsrA protein, binds CsrA and prevents it from repressing translation of its target genes, one of which is flagellin. Binds to flagellin and participates in the assembly of the flagellum. The polypeptide is Flagellar assembly factor FliW (Thermotoga sp. (strain RQ2)).